Here is a 341-residue protein sequence, read N- to C-terminus: HTH-type transcriptional repressor PurR (341 aa).

Residues 2-56 (ATIKDVAKRANVSTTTVSHVINKTRFVSEETRNAVWAAIKELHYSPSAVARSLKV) enclose the HTH lacI-type domain. A DNA-binding region (H-T-H motif) is located at residues 4-23 (IKDVAKRANVSTTTVSHVIN). The DNA-binding element occupies 48–56 (SAVARSLKV). Residues Tyr-73, Arg-190, Thr-192, Phe-221, and Asp-275 each coordinate hypoxanthine.

Homodimer.

It participates in purine metabolism; purine nucleotide biosynthesis [regulation]. In terms of biological role, is the main repressor of the genes involved in the de novo synthesis of purine nucleotides, regulating purB, purC, purEK, purF, purHD, purL, purMN and guaBA expression. PurR is allosterically activated to bind its cognate DNA by binding the purine corepressors, hypoxanthine or guanine, thereby effecting transcription repression. The protein is HTH-type transcriptional repressor PurR of Escherichia coli O139:H28 (strain E24377A / ETEC).